We begin with the raw amino-acid sequence, 475 residues long: Ribulose bisphosphate carboxylase large chain (475 aa).

A propeptide spanning residues 1–2 is cleaved from the precursor; that stretch reads MS. Position 3 is an N-acetylproline (proline 3). At lysine 14 the chain carries N6,N6,N6-trimethyllysine. Residues asparagine 123 and threonine 173 each coordinate substrate. Lysine 175 functions as the Proton acceptor in the catalytic mechanism. Residue lysine 177 participates in substrate binding. Residues lysine 201, aspartate 203, and glutamate 204 each contribute to the Mg(2+) site. The residue at position 201 (lysine 201) is an N6-carboxylysine. The active-site Proton acceptor is the histidine 294. Arginine 295, histidine 327, and serine 379 together coordinate substrate.

This sequence belongs to the RuBisCO large chain family. Type I subfamily. In terms of assembly, heterohexadecamer of 8 large chains and 8 small chains; disulfide-linked. The disulfide link is formed within the large subunit homodimers. Mg(2+) is required as a cofactor. In terms of processing, the disulfide bond which can form in the large chain dimeric partners within the hexadecamer appears to be associated with oxidative stress and protein turnover.

The protein localises to the plastid. The protein resides in the chloroplast. It carries out the reaction 2 (2R)-3-phosphoglycerate + 2 H(+) = D-ribulose 1,5-bisphosphate + CO2 + H2O. It catalyses the reaction D-ribulose 1,5-bisphosphate + O2 = 2-phosphoglycolate + (2R)-3-phosphoglycerate + 2 H(+). In terms of biological role, ruBisCO catalyzes two reactions: the carboxylation of D-ribulose 1,5-bisphosphate, the primary event in carbon dioxide fixation, as well as the oxidative fragmentation of the pentose substrate in the photorespiration process. Both reactions occur simultaneously and in competition at the same active site. This Populus tremuloides (Quaking aspen) protein is Ribulose bisphosphate carboxylase large chain.